The sequence spans 359 residues: MDVRQVLHMKGGAGENSYAMNSFIQRQVISITKPITEAAITALYSGDTVTTRLAIADLGCSSGPNALFAVTELIKTVEELRKKMGRENSPEYQIFLNDLPGNDFNAIFRSLPIENDVDGVCFINGVPGSFYGRLFPRNTLHFIHSSYSLMWLSQVPIGIESNKGNIYMANTCPQSVLNAYYKQFQEDHALFLRCRAQEVVPGGRMVLTILGRRSEDRASTECCLIWQLLAMALNQMVSEGLIEEEKMDKFNIPQYTPSPTEVEAEILKEGSFLIDHIEASEIYWSSCTKDGDGGGSVEEEGYNVARCMRAVAEPLLLDHFGEAIIEDVFHRYKLLIIERMSKEKTKFINVIVSLIRKSD.

Y18 contributes to the S-adenosyl-L-methionine binding site. Substrate-binding positions include Y18, 21 to 25, and Q25; that span reads NSFIQ. S-adenosyl-L-methionine contacts are provided by residues G59, 59–60, 59–61, N65, 96–99, D98, 129–131, and 146–148; these read GC, GCS, LNDL, SFY, and SYS. Substrate is bound by residues 147 to 151 and W151; that span reads YSLMW. 4 residues coordinate Mg(2+): N162, D248, F250, and N251. Y255 serves as a coordination point for substrate.

It belongs to the methyltransferase superfamily. SABATH family.

It carries out the reaction salicylate + S-adenosyl-L-methionine = methyl salicylate + S-adenosyl-L-homocysteine. Catalyzes the methylation of the free carboxyl end of the plant hormone salicylic acid (SA). Converts SA to SA methyl ester (MSA). The volatile compound MSA is hypothesized to act as an airborne signal that triggers defense responses in uninfected plants. MSA is an important chemoattractant for moth pollinated flowering plants. The polypeptide is Salicylate carboxymethyltransferase (SAMT) (Clarkia breweri (Fairy fans)).